Here is a 362-residue protein sequence, read N- to C-terminus: Probable secreted beta-glucosidase UTH1 (362 aa).

Residues Met1–Ala17 form the signal peptide.

It belongs to the SUN family.

It localises to the mitochondrion outer membrane. It is found in the secreted. The protein resides in the cell wall. Functionally, involved in aging, oxidative stress response, and in the regulation of mitochondrial biogenesis. Inactivation of UTH1 increases life span, leads to higher resistance to heat stress and to hydrogen peroxide, and increases sensitivity to the superoxide radical-generating drug paraquat and to copper. Also required for the selective autophagic degradation of mitochondria (mitophagy) in response to nitrogen starvation. Involved in the remodeling of the cell wall during the various phases of yeast culture development and under various environmental conditions and plays a role in septation. Involved in cell sensitivity to boric acid. This Saccharomyces cerevisiae (strain RM11-1a) (Baker's yeast) protein is Probable secreted beta-glucosidase UTH1 (UTH1).